The primary structure comprises 456 residues: MAAALKCLLTLGRWCPGLGVAPQARALAALVPGVTQVDNKSGFLQKRPHRQHPGILKLPHVRLPQALANGAQLLLLGSAGPTMENQVQTLTSYLWSRHLPVEPEELQRRARHLEKKFLENPDLSQTEEKLRGAVLHALRKTTYHWQELSYTEGLSLVYMAARLDGGFAAVSRAFHEIRARNPAFQPQTLMDFGSGTGSVTWAAHSIWGQSLREYMCVDRSAAMLVLAEKLLKGGSESGEPYIPGVFFRQFLPVSPKVQFDVVVSAFSLSELPSKADRTEVVQTLWRKTGHFLVLVENGTKAGHSLLMDARDLVLKGKEKSPLDPRPGFVFAPCPHELPCPQLTNLACSFSQAYHPIPFSWNKKPKEEKFSMVILARGSPEEAHRWPRITQPVLKRPRHVHCHLCCPDGHMQHAVLTARRHGRDLYRCARVSSWGDLLPVLTPSAFPPSTAQDPSES.

Residues 1–19 (MAAALKCLLTLGRWCPGLG) constitute a mitochondrion transit peptide. 4 residues coordinate [4Fe-4S] cluster: Cys333, Cys339, Cys347, and Cys404.

The protein belongs to the methyltransferase superfamily. Rsm22 family. Associates with the mitochondrial ribosome (mitoribosome).

It localises to the mitochondrion matrix. In terms of biological role, mitochondrial ribosome (mitoribosome) assembly factor. Binds at the interface of the head and body domains of the mitochondrial small ribosomal subunit (mt-SSU), occluding the mRNA channel and preventing compaction of the head domain towards the body. Probable inactive methyltransferase: retains the characteristic folding and ability to bind S-adenosyl-L-methionine, but it probably lost its methyltransferase activity. The sequence is that of Ribosome assembly protein METTL17, mitochondrial from Homo sapiens (Human).